Consider the following 145-residue polypeptide: I-leader protein (145 aa).

The protein localises to the host cytoplasm. Its subcellular location is the host perinuclear region. The sequence is that of I-leader protein from Human adenovirus C serotype 2 (HAdV-2).